The primary structure comprises 475 residues: Ribulose bisphosphate carboxylase large chain (475 aa).

The propeptide occupies 1 to 2 (MS). Residue P3 is modified to N-acetylproline. K14 carries the N6,N6,N6-trimethyllysine modification. Residues N123 and T173 each coordinate substrate. The active-site Proton acceptor is the K175. K177 is a binding site for substrate. 3 residues coordinate Mg(2+): K201, D203, and E204. Residue K201 is modified to N6-carboxylysine. The Proton acceptor role is filled by H294. Substrate contacts are provided by R295, H327, and S379.

The protein belongs to the RuBisCO large chain family. Type I subfamily. Heterohexadecamer of 8 large chains and 8 small chains; disulfide-linked. The disulfide link is formed within the large subunit homodimers. The cofactor is Mg(2+). In terms of processing, the disulfide bond which can form in the large chain dimeric partners within the hexadecamer appears to be associated with oxidative stress and protein turnover.

It localises to the plastid. The protein localises to the chloroplast. It catalyses the reaction 2 (2R)-3-phosphoglycerate + 2 H(+) = D-ribulose 1,5-bisphosphate + CO2 + H2O. It carries out the reaction D-ribulose 1,5-bisphosphate + O2 = 2-phosphoglycolate + (2R)-3-phosphoglycerate + 2 H(+). In terms of biological role, ruBisCO catalyzes two reactions: the carboxylation of D-ribulose 1,5-bisphosphate, the primary event in carbon dioxide fixation, as well as the oxidative fragmentation of the pentose substrate in the photorespiration process. Both reactions occur simultaneously and in competition at the same active site. This Citrus sinensis (Sweet orange) protein is Ribulose bisphosphate carboxylase large chain.